Reading from the N-terminus, the 324-residue chain is uncharacterized protein (324 aa).

Helical transmembrane passes span 5–24, 39–61, 68–90, 95–117, 130–152, 162–179, 199–218, and 228–250; these read VIGI…NRAM, FIFM…PLLL, FYWI…FAAA, WLIA…LFYV, QKIP…LIQL, MLLF…AYPL, LGMT…YGWW, and TVQS…FWAT.

It is found in the cell membrane. This is an uncharacterized protein from Bacillus subtilis (strain 168).